We begin with the raw amino-acid sequence, 88 residues long: Large ribosomal subunit protein eL31 (88 aa).

It belongs to the eukaryotic ribosomal protein eL31 family.

This chain is Large ribosomal subunit protein eL31 (rpl31e), found in Archaeoglobus fulgidus (strain ATCC 49558 / DSM 4304 / JCM 9628 / NBRC 100126 / VC-16).